Here is a 328-residue protein sequence, read N- to C-terminus: Acyl-CoA wax alcohol acyltransferase 1 (328 aa).

Transmembrane regions (helical) follow at residues Ser12–Leu32 and Ile34–Leu53.

It belongs to the diacylglycerol acyltransferase family.

It localises to the endoplasmic reticulum membrane. It carries out the reaction a long chain fatty alcohol + a fatty acyl-CoA = a wax ester + CoA. The catalysed reaction is 1,2-di-(9Z-octadecenoyl)-sn-glycerol + (9Z)-octadecenoyl-CoA = 1,2,3-tri-(9Z-octadecenoyl)-glycerol + CoA. The enzyme catalyses hexadecan-1-ol + (9Z)-octadecenoyl-CoA = hexadecanyl (9Z)-octadecenoate + CoA. It catalyses the reaction decan-1-ol + (9Z)-octadecenoyl-CoA = 1-O-decyl-(9Z)-octadecenoate + CoA. It carries out the reaction (9Z)-hexadecen-1-ol + (9Z)-octadecenoyl-CoA = 1-O-(9Z)-hexadecenyl (9Z)-octadecenoate + CoA. The catalysed reaction is octadecan-1-ol + (9Z)-octadecenoyl-CoA = 1-O-octadecyl (9Z)-octadecenoate + CoA. The enzyme catalyses (9Z)-octadecen-1-ol + (9Z)-octadecenoyl-CoA = 1-O-(9Z)-octadecenyl (9Z)-octadecenoate + CoA. It catalyses the reaction hexadecan-1-ol + hexadecanoyl-CoA = hexadecanyl hexadecanoate + CoA. It carries out the reaction hexadecan-1-ol + (9Z)-hexadecenoyl-CoA = 1-O-hexadecyl (9Z)-hexadecenoate + CoA. The catalysed reaction is hexadecan-1-ol + octadecanoyl-CoA = hexadecanyl octadecanoate + CoA. The enzyme catalyses eicosan-1-ol + (9Z)-octadecenoyl-CoA = 1-O-eicosanyl (9Z)-octadecenoate + CoA. Acyltransferase that catalyzes the formation of ester bonds between fatty alcohols and fatty acyl-CoAs to form wax monoesters. Shows a strong preference for decyl alcohol (C10), with less activity towards C16 and C18 alcohols. Shows a strong preference for saturated acyl-CoAs. The chain is Acyl-CoA wax alcohol acyltransferase 1 (Awat1) from Mus musculus (Mouse).